The following is a 184-amino-acid chain: ATP synthase subunit b, chloroplastic (184 aa).

Residues 27-49 (LATNPINLSVVLGVLIFFGKGVL) form a helical membrane-spanning segment.

It belongs to the ATPase B chain family. In terms of assembly, F-type ATPases have 2 components, F(1) - the catalytic core - and F(0) - the membrane proton channel. F(1) has five subunits: alpha(3), beta(3), gamma(1), delta(1), epsilon(1). F(0) has four main subunits: a(1), b(1), b'(1) and c(10-14). The alpha and beta chains form an alternating ring which encloses part of the gamma chain. F(1) is attached to F(0) by a central stalk formed by the gamma and epsilon chains, while a peripheral stalk is formed by the delta, b and b' chains.

It is found in the plastid. The protein localises to the chloroplast thylakoid membrane. In terms of biological role, f(1)F(0) ATP synthase produces ATP from ADP in the presence of a proton or sodium gradient. F-type ATPases consist of two structural domains, F(1) containing the extramembraneous catalytic core and F(0) containing the membrane proton channel, linked together by a central stalk and a peripheral stalk. During catalysis, ATP synthesis in the catalytic domain of F(1) is coupled via a rotary mechanism of the central stalk subunits to proton translocation. Component of the F(0) channel, it forms part of the peripheral stalk, linking F(1) to F(0). This Oenothera elata subsp. hookeri (Hooker's evening primrose) protein is ATP synthase subunit b, chloroplastic.